Consider the following 131-residue polypeptide: Profilin-7 (131 aa).

An intrachain disulfide couples Cys13 to Cys115. The Involved in PIP2 interaction motif lies at 81–97 (AVIRGKKGAGGITIKKT). Residue Thr111 is modified to Phosphothreonine.

It belongs to the profilin family. Occurs in many kinds of cells as a complex with monomeric actin in a 1:1 ratio. Post-translationally, phosphorylated by MAP kinases.

It localises to the cytoplasm. The protein localises to the cytoskeleton. Its function is as follows. Binds to actin and affects the structure of the cytoskeleton. At high concentrations, profilin prevents the polymerization of actin, whereas it enhances it at low concentrations. The polypeptide is Profilin-7 (Olea europaea (Common olive)).